A 124-amino-acid chain; its full sequence is Small ribosomal subunit protein uS12 (124 aa).

The segment at 1–32 is disordered; the sequence is MPTIQQLVRKGRQDKVEKTKTPALKGSPQRRG. Over residues 11 to 20 the composition is skewed to basic and acidic residues; the sequence is GRQDKVEKTK. 3-methylthioaspartic acid is present on D89.

Belongs to the universal ribosomal protein uS12 family. Part of the 30S ribosomal subunit. Contacts proteins S8 and S17. May interact with IF1 in the 30S initiation complex.

Functionally, with S4 and S5 plays an important role in translational accuracy. In terms of biological role, interacts with and stabilizes bases of the 16S rRNA that are involved in tRNA selection in the A site and with the mRNA backbone. Located at the interface of the 30S and 50S subunits, it traverses the body of the 30S subunit contacting proteins on the other side and probably holding the rRNA structure together. The combined cluster of proteins S8, S12 and S17 appears to hold together the shoulder and platform of the 30S subunit. The protein is Small ribosomal subunit protein uS12 of Frankia alni (strain DSM 45986 / CECT 9034 / ACN14a).